The chain runs to 60 residues: MDPCECSKSGNCNCGGSCTCTNCSCKSCKKSCCPCCPSGCTKCASGCVCIGKTCDTSCCQ.

Residues 1-28 (MDPCECSKSGNCNCGGSCTCTNCSCKSC) form a beta region. A divalent metal cation contacts are provided by Cys4, Cys6, Cys12, Cys14, Cys18, Cys20, Cys23, Cys25, Cys28, Cys32, Cys33, Cys35, Cys36, Cys40, Cys43, Cys47, Cys49, Cys54, Cys58, and Cys59. The alpha stretch occupies residues 29-60 (KKSCCPCCPSGCTKCASGCVCIGKTCDTSCCQ).

The protein belongs to the metallothionein superfamily. Type 1 family.

Its function is as follows. Metallothioneins have a high content of cysteine residues that bind various heavy metals. The polypeptide is Metallothionein A (mta) (Chaenocephalus aceratus (Blackfin icefish)).